The primary structure comprises 159 residues: Deoxyuridine 5'-triphosphate nucleotidohydrolase (159 aa).

Residues arginine 78 to glycine 80, asparagine 91, leucine 95 to aspartate 97, and methionine 105 contribute to the substrate site.

It belongs to the dUTPase family. Mg(2+) is required as a cofactor.

It catalyses the reaction dUTP + H2O = dUMP + diphosphate + H(+). It functions in the pathway pyrimidine metabolism; dUMP biosynthesis; dUMP from dCTP (dUTP route): step 2/2. In terms of biological role, this enzyme is involved in nucleotide metabolism: it produces dUMP, the immediate precursor of thymidine nucleotides and it decreases the intracellular concentration of dUTP so that uracil cannot be incorporated into DNA. The polypeptide is Deoxyuridine 5'-triphosphate nucleotidohydrolase (Buchnera aphidicola subsp. Schizaphis graminum (strain Sg)).